Reading from the N-terminus, the 192-residue chain is Type 1 phosphatases regulator YPI2 (192 aa).

2 disordered regions span residues 1–53 and 65–192; these read MLQR…GKHK and EFGQ…PVQK. The segment covering 8 to 18 has biased composition (low complexity); sequence QTSSSTQTETT. The span at 25–49 shows a compositional bias: basic and acidic residues; it reads RRPETRQKEDSKVKWTEDVIDNEHM. Positions 69–79 are enriched in low complexity; it reads SSDESSDSSSD. Positions 86-103 are enriched in basic and acidic residues; that stretch reads YERNNDFDQNHRHSHNFD. The segment covering 134–148 has biased composition (polar residues); sequence KGNTGMSKPSSSSPD. Over residues 157 to 169 the composition is skewed to basic residues; sequence IHKRNKKVRKPKR.

The protein belongs to the YPI1 family.

It localises to the nucleus. Regulator of type 1 phosphatases which maintains protein phosphatase activity under strict control. This Scheffersomyces stipitis (strain ATCC 58785 / CBS 6054 / NBRC 10063 / NRRL Y-11545) (Yeast) protein is Type 1 phosphatases regulator YPI2 (YPI2).